A 342-amino-acid polypeptide reads, in one-letter code: N-acetyl-gamma-glutamyl-phosphate reductase (342 aa).

C149 is an active-site residue.

This sequence belongs to the NAGSA dehydrogenase family. Type 1 subfamily.

The protein resides in the cytoplasm. The catalysed reaction is N-acetyl-L-glutamate 5-semialdehyde + phosphate + NADP(+) = N-acetyl-L-glutamyl 5-phosphate + NADPH + H(+). It functions in the pathway amino-acid biosynthesis; L-arginine biosynthesis; N(2)-acetyl-L-ornithine from L-glutamate: step 3/4. Functionally, catalyzes the NADPH-dependent reduction of N-acetyl-5-glutamyl phosphate to yield N-acetyl-L-glutamate 5-semialdehyde. The protein is N-acetyl-gamma-glutamyl-phosphate reductase of Nitrosomonas eutropha (strain DSM 101675 / C91 / Nm57).